A 557-amino-acid polypeptide reads, in one-letter code: Dihydroxy-acid dehydratase 1 (557 aa).

Position 50 (Cys50) interacts with [2Fe-2S] cluster. Position 82 (Asp82) interacts with Mg(2+). [2Fe-2S] cluster is bound at residue Cys123. Mg(2+) is bound by residues Asp124 and Lys125. An N6-carboxylysine modification is found at Lys125. Cys195 contacts [2Fe-2S] cluster. Position 447 (Glu447) interacts with Mg(2+). The active-site Proton acceptor is Ser473.

This sequence belongs to the IlvD/Edd family. As to quaternary structure, homodimer. It depends on [2Fe-2S] cluster as a cofactor. Mg(2+) serves as cofactor.

It catalyses the reaction (2R)-2,3-dihydroxy-3-methylbutanoate = 3-methyl-2-oxobutanoate + H2O. The catalysed reaction is (2R,3R)-2,3-dihydroxy-3-methylpentanoate = (S)-3-methyl-2-oxopentanoate + H2O. It participates in amino-acid biosynthesis; L-isoleucine biosynthesis; L-isoleucine from 2-oxobutanoate: step 3/4. It functions in the pathway amino-acid biosynthesis; L-valine biosynthesis; L-valine from pyruvate: step 3/4. Its function is as follows. Functions in the biosynthesis of branched-chain amino acids. Catalyzes the dehydration of (2R,3R)-2,3-dihydroxy-3-methylpentanoate (2,3-dihydroxy-3-methylvalerate) into 2-oxo-3-methylpentanoate (2-oxo-3-methylvalerate) and of (2R)-2,3-dihydroxy-3-methylbutanoate (2,3-dihydroxyisovalerate) into 2-oxo-3-methylbutanoate (2-oxoisovalerate), the penultimate precursor to L-isoleucine and L-valine, respectively. The polypeptide is Dihydroxy-acid dehydratase 1 (Cupriavidus pinatubonensis (strain JMP 134 / LMG 1197) (Cupriavidus necator (strain JMP 134))).